The following is a 168-amino-acid chain: Acetone carboxylase gamma subunit (168 aa).

In terms of assembly, heterohexamer of two alpha, two beta and two gamma subunits. Requires Fe cation as cofactor. It depends on Mg(2+) as a cofactor. The cofactor is Zn(2+).

The enzyme catalyses acetone + hydrogencarbonate + 2 ATP + 3 H2O = acetoacetate + 2 AMP + 4 phosphate + 4 H(+). Its function is as follows. Catalyzes the carboxylation of acetone to form acetoacetate. Has a reduced activity on butanone, and no activity on 2-pentatone, 3-pentatone, 2-hexanone, chloroacetone, pyruvate, phosphoenolpyruvate, acetaldehyde, propionaldehyde and propylene oxide. This is Acetone carboxylase gamma subunit from Xanthobacter autotrophicus (strain ATCC BAA-1158 / Py2).